We begin with the raw amino-acid sequence, 440 residues long: Ribosomal protein uS12 methylthiotransferase RimO (440 aa).

In terms of domain architecture, MTTase N-terminal spans 5–116 (PTIAISHLGC…IVNVIERAEQ (112 aa)). [4Fe-4S] cluster-binding residues include C14, C50, C79, C154, C158, and C161. A Radical SAM core domain is found at 140-370 (TTTEGVAYLR…ALQQPISWRK (231 aa)). In terms of domain architecture, TRAM spans 372–438 (QQEVGKTVEV…EYDLFGQVVS (67 aa)).

It belongs to the methylthiotransferase family. RimO subfamily. Requires [4Fe-4S] cluster as cofactor.

It is found in the cytoplasm. It catalyses the reaction L-aspartate(89)-[ribosomal protein uS12]-hydrogen + (sulfur carrier)-SH + AH2 + 2 S-adenosyl-L-methionine = 3-methylsulfanyl-L-aspartate(89)-[ribosomal protein uS12]-hydrogen + (sulfur carrier)-H + 5'-deoxyadenosine + L-methionine + A + S-adenosyl-L-homocysteine + 2 H(+). In terms of biological role, catalyzes the methylthiolation of an aspartic acid residue of ribosomal protein uS12. This chain is Ribosomal protein uS12 methylthiotransferase RimO, found in Trichormus variabilis (strain ATCC 29413 / PCC 7937) (Anabaena variabilis).